Here is a 373-residue protein sequence, read N- to C-terminus: Sorting nexin-21 (373 aa).

Positions 1-107 (MHRGTQEGAM…RSPPPDGQWG (107 aa)) are disordered. The segment covering 21–37 (ALAGDGPGEAAASPEAE) has biased composition (low complexity). The span at 55 to 65 (SRLSGTLSFTS) shows a compositional bias: polar residues. The span at 66-81 (AEDDEDDEDEDDEEAG) shows a compositional bias: acidic residues. The 118-residue stretch at 129–246 (QRLLFEVTSA…DFFVLPELRR (118 aa)) folds into the PX domain. A 1,2-diacyl-sn-glycero-3-phospho-(1D-myo-inositol-3-phosphate)-binding residues include arginine 171, serine 173, lysine 198, and arginine 212.

It belongs to the sorting nexin family. As to quaternary structure, monomer. Highly expressed in fetus liver, but only weakly expressed in brain, skeleton muscle, smooth muscle, and cardiac muscle, kidney, and adrenal gland.

Its subcellular location is the cytoplasmic vesicle membrane. The protein resides in the early endosome membrane. Functionally, binds to membranes enriched in phosphatidylinositol 3-phosphate (PtdIns(P3)) and phosphatidylinositol 4,5-bisphosphate. May be involved in several stages of intracellular trafficking. The sequence is that of Sorting nexin-21 (SNX21) from Homo sapiens (Human).